A 333-amino-acid polypeptide reads, in one-letter code: GTPase Obg (333 aa).

The 159-residue stretch at Met-1–Leu-159 folds into the Obg domain. The interval Lys-63–Asp-85 is disordered. The span at Gly-75–Asp-84 shows a compositional bias: basic and acidic residues. Positions Ala-160–Cys-329 constitute an OBG-type G domain. Residues Gly-166–Ser-173, Phe-191–Ser-195, Asp-213–Gly-216, Asn-283–Asp-286, and Ser-310–Ala-312 each bind GTP. Mg(2+) contacts are provided by Ser-173 and Thr-193.

It belongs to the TRAFAC class OBG-HflX-like GTPase superfamily. OBG GTPase family. In terms of assembly, monomer. Mg(2+) serves as cofactor.

It is found in the cytoplasm. Its function is as follows. An essential GTPase which binds GTP, GDP and possibly (p)ppGpp with moderate affinity, with high nucleotide exchange rates and a fairly low GTP hydrolysis rate. Plays a role in control of the cell cycle, stress response, ribosome biogenesis and in those bacteria that undergo differentiation, in morphogenesis control. The chain is GTPase Obg from Desulfosudis oleivorans (strain DSM 6200 / JCM 39069 / Hxd3) (Desulfococcus oleovorans).